Reading from the N-terminus, the 810-residue chain is Zinc finger transcription factor YRR1 (810 aa).

Residues 1 to 47 form a disordered region; it reads MKRRSDALLGSFQATNVTPPSDNSNSTAGGANGSNSGTPTSTSGKKR. Residues 12–22 show a composition bias toward polar residues; that stretch reads FQATNVTPPSD. The span at 23 to 43 shows a compositional bias: low complexity; the sequence is NSNSTAGGANGSNSGTPTSTS. Residues 54 to 82 constitute a DNA-binding region (zn(2)-C6 fungal-type); it reads CGFCRRRKLRCDQQKPMCSTCISRNLTTC. The interval 722–742 is disordered; the sequence is ELDPQSDNPSSEAKIVSDRQR.

Its subcellular location is the cytoplasm. The protein resides in the nucleus. Transcription factor involved in the regulation of multidrug resistance genes. Acts in concert with YRR1. The polypeptide is Zinc finger transcription factor YRR1 (YRR1) (Saccharomyces cerevisiae (strain ATCC 204508 / S288c) (Baker's yeast)).